The chain runs to 85 residues: Scratcher peptide (85 aa).

The signal sequence occupies residues 1–24 (MTSVQSVTCCCLLWLMLSVQPITP). A propeptide spanning residues 25 to 38 (GSPGPAQLSRERSF) is cleaved from the precursor. Glutamate 47 bears the 4-carboxyglutamate mark. Aspartate 67 is subject to Aspartic acid 1-amide. Residues 68–85 (KRDVVSPRIRRRKRSKAM) constitute a propeptide that is removed on maturation.

This sequence belongs to the conotoxin J superfamily. Contains 2 disulfide bonds. In terms of tissue distribution, expressed by the venom duct.

It localises to the secreted. Its function is as follows. Causes scratching in mice. This is Scratcher peptide from Conus geographus (Geography cone).